The following is a 203-amino-acid chain: Putative 3-methyladenine DNA glycosylase (203 aa).

The protein belongs to the DNA glycosylase MPG family.

The polypeptide is Putative 3-methyladenine DNA glycosylase (Clostridium botulinum (strain ATCC 19397 / Type A)).